The chain runs to 432 residues: Adenylosuccinate synthetase (432 aa).

Residues 12 to 18 and 40 to 42 each bind GTP; these read GDEGKGK and GHT. Asp13 (proton acceptor) is an active-site residue. The Mg(2+) site is built by Asp13 and Gly40. Residues 13–16, 38–41, Thr126, Arg140, Gln219, Thr234, and Arg300 each bind IMP; these read DEGK and NAGH. His41 (proton donor) is an active-site residue. 296-302 serves as a coordination point for substrate; that stretch reads STTGRPR. Residues Arg302, 328–330, and 410–412 contribute to the GTP site; these read KLD and STG.

The protein belongs to the adenylosuccinate synthetase family. Homodimer. The cofactor is Mg(2+).

It is found in the cytoplasm. It carries out the reaction IMP + L-aspartate + GTP = N(6)-(1,2-dicarboxyethyl)-AMP + GDP + phosphate + 2 H(+). Its pathway is purine metabolism; AMP biosynthesis via de novo pathway; AMP from IMP: step 1/2. Plays an important role in the de novo pathway of purine nucleotide biosynthesis. Catalyzes the first committed step in the biosynthesis of AMP from IMP. The sequence is that of Adenylosuccinate synthetase from Aquifex aeolicus (strain VF5).